The primary structure comprises 1052 residues: METPTGSGRPSRMATPRLSERKRQLFGSPRSRLRQINDDEDDADVDSLGVLPLKTHVAANRKGRSLFAAVPGKSSSSANSSPETNKENKKTRGGVMTATAEQLPQLFTATMRLNSNSSSNSRNSSPRQTRVQRKRADSSMSSPTSSSEGTPSSRARNSIRRSPRTFSAQKDPDAFSSPESFQTRLSKVAAMLMKGQDSRSMLEKSKKKHNHSLKTTAQVHTTKPKKTSPAEESQSDDEKPSSSKNSRKNTEVRETRSSQIISPKTRNRRRPFTSADINCKTLKAAAHLHENMRSYDEEKTAAVKLENSRSRSKSPVEVFKSNDDAVKRNTGNTNNKTAKSSEVATAKRPESPGSSMKIDVEVPESDEEASNHKPQKRQHPETSTPVAPSADADSGSPQSKMRKVTLSSSIPTMAFYSHSGEAVTKSRRRPSISKNSLKQPTKISPTSRPLLGINKGVHHKIRKRHGFANRLPATDMDNILNSLSNERLKNLITTKREERAKVEEVHQILRNAKDPIKMAKPLSVIEADDANNNNNLPATAWQETSADFSDLSDVEDIDPIIEVEPIIPIIRHEPVQKSPTAEPADLSKRKFFKSGRRSSTCMEVRITDNIRASVSQGKIELVQTIRRKPRQVRVKSATIFSAEQATVDAILKNLDDTVVDEIVEANPVVQATPIDAEETTMETESLPDIIEYAPEANDVEIDPFAEFRQRLPYQTDDPNVVEQQQILLEFLISNNICTEKNFEIFIANPDDYKDEANQIVDNLYMVVNSEEAAQLAQMETVENTAVAIAPKQDAPAVEEVQPKLFPIFTQRLQPVVQKSLRRRPDTSMRLLTAAGGSNQYQIDAGQKAFGARQCQQCGLVYTVHEPEEELLHREYHNSIHVLRFKGWIDEDIVSVYPEWASDGRIIRINERAPTARLDRLRDLIGVVDKELGYSSYIVPKIFVAFIAVRKQQIVGFCLVQPLSQAHRFIQVDGTDYFSEESYPASCGVSRIWVSPLQRRSGIASKLLRVVQCHTVLGQEIARECIAFSTPTDDGRALARQFTGLDNFLTYDQ.

4 disordered regions span residues 1–45 (METP…DADV), 61–277 (RKGR…SADI), 290–405 (ENMR…RKVT), and 419–452 (SGEA…PLLG). Positions 99-113 (TAEQLPQLFTATMRL) are enriched in polar residues. 2 stretches are compositionally biased toward low complexity: residues 114–125 (NSNSSSNSRNSS) and 138–153 (SSMS…TPSS). 2 positions are modified to phosphoserine: Ser-176 and Ser-177. Over residues 290–309 (ENMRSYDEEKTAAVKLENSR) the composition is skewed to basic and acidic residues. Residues Ser-310, Ser-312, and Ser-314 each carry the phosphoserine modification. 3 stretches are compositionally biased toward polar residues: residues 329 to 343 (NTGN…SSEV), 395 to 405 (GSPQSKMRKVT), and 432 to 447 (ISKN…SPTS). The CCHH-type zinc finger occupies 852–876 (RQCQQCGLVYTVHEPEEELLHREYH). In terms of domain architecture, N-acetyltransferase spans 906-1052 (IRINERAPTA…GLDNFLTYDQ (147 aa)).

This sequence belongs to the acetyltransferase family. ECO subfamily.

It localises to the nucleus. Its function is as follows. Acetyltransferase required for the establishment of sister chromatid cohesion and couple the processes of cohesion and DNA replication to ensure that only sister chromatids become paired together. In contrast to the structural cohesins, the deposition and establishment factors are required only during S phase. In Drosophila melanogaster (Fruit fly), this protein is N-acetyltransferase eco (eco).